Reading from the N-terminus, the 81-residue chain is Small ribosomal subunit protein bS16 (81 aa).

Belongs to the bacterial ribosomal protein bS16 family.

The polypeptide is Small ribosomal subunit protein bS16 (Nautilia profundicola (strain ATCC BAA-1463 / DSM 18972 / AmH)).